The sequence spans 759 residues: Glucosylceramidase (759 aa).

The Proton donor role is filled by Glu247. Glu497 acts as the Nucleophile in catalysis. Residues 576–600 (AFENESQRDPQSPAYSESQRNTESY) form a disordered region. Positions 584–599 (DPQSPAYSESQRNTES) are enriched in polar residues.

The protein belongs to the glycosyl hydrolase 5 (cellulase A) family.

Its subcellular location is the membrane. It carries out the reaction a beta-D-glucosyl-(1&lt;-&gt;1')-N-acylsphing-4-enine + H2O = an N-acylsphing-4-enine + D-glucose. In terms of biological role, specifically hydrolyzes the glucosidic linkage in glucosylceramide. May prevent accumulation of aberrent glucosylceramide containing immature ceramide. This is Glucosylceramidase from Aspergillus fumigatus (Neosartorya fumigata).